The chain runs to 140 residues: L-fucose mutarotase (140 aa).

The active-site Proton donor is His-22. Substrate contacts are provided by residues Asp-30, Arg-107, and Tyr-129 to Asn-131.

This sequence belongs to the RbsD / FucU family. FucU mutarotase subfamily. As to quaternary structure, homodecamer.

It is found in the cytoplasm. The enzyme catalyses alpha-L-fucose = beta-L-fucose. The protein operates within carbohydrate metabolism; L-fucose metabolism. Its function is as follows. Involved in the anomeric conversion of L-fucose. The chain is L-fucose mutarotase from Shigella boydii serotype 18 (strain CDC 3083-94 / BS512).